The primary structure comprises 178 residues: Peptide methionine sulfoxide reductase MsrA (178 aa).

The active site involves Cys-12.

Belongs to the MsrA Met sulfoxide reductase family.

It carries out the reaction L-methionyl-[protein] + [thioredoxin]-disulfide + H2O = L-methionyl-(S)-S-oxide-[protein] + [thioredoxin]-dithiol. It catalyses the reaction [thioredoxin]-disulfide + L-methionine + H2O = L-methionine (S)-S-oxide + [thioredoxin]-dithiol. Has an important function as a repair enzyme for proteins that have been inactivated by oxidation. Catalyzes the reversible oxidation-reduction of methionine sulfoxide in proteins to methionine. This is Peptide methionine sulfoxide reductase MsrA from Erwinia tasmaniensis (strain DSM 17950 / CFBP 7177 / CIP 109463 / NCPPB 4357 / Et1/99).